The sequence spans 660 residues: Neurexin-2-beta (660 aa).

The span at 1–10 shows a compositional bias: gly residues; sequence MPPGGSGQGG. The tract at residues 1–27 is disordered; sequence MPPGGSGQGGCPRRPPALAGPLPPPPP. The first 46 residues, 1–46, serve as a signal peptide directing secretion; the sequence is MPPGGSGQGGCPRRPPALAGPLPPPPPPPPLPLLLGLLLLLGAAEG. Residues 47–584 are Extracellular-facing; that stretch reads ARVSSSLSTT…EVIRESSSTT (538 aa). The 209-residue stretch at 87–295 folds into the Laminin G-like domain; it reads TTYIFGKGGA…HLRLVGEGPS (209 aa). Ca(2+) contacts are provided by aspartate 139 and valine 156. N-linked (GlcNAc...) asparagine glycosylation occurs at asparagine 186. Residues isoleucine 238 and asparagine 240 each contribute to the Ca(2+) site. Residue serine 350 is glycosylated (O-linked (Xyl...) (heparan sulfate) serine). 2 disordered regions span residues 408–458 and 537–571; these read ATQD…LPPT and EPRR…RGPP. An N-linked (GlcNAc...) asparagine glycan is attached at asparagine 561. A helical transmembrane segment spans residues 585 to 605; the sequence is GMVVGIVAAAALCILILLYAM. Residues 606-660 are Cytoplasmic-facing; it reads YKYRNRDEGSYQVDQSRNYISNSAQSNGAVVKEKAPAAPKTPSKAKKNKDKEYYV. The interval 627–660 is disordered; that stretch reads NSAQSNGAVVKEKAPAAPKTPSKAKKNKDKEYYV.

It belongs to the neurexin family. As to quaternary structure, interacts (via cytoplasmic C-terminal region) with CASK. Specific isoforms bind alpha-dystroglycan and neuroligins NLGN1, NLGN2 and NLGN3. Interacts with CBLN1, CBLN2 and, less avidly, with CBLN4. Interacts with CLSTN3. O-glycosylated; contains heparan sulfate. Heparan sulfate attachment is required for synapse development by mediating interactions with neuroligins.

Its subcellular location is the presynaptic cell membrane. Functionally, neuronal cell surface protein that may be involved in cell recognition and cell adhesion. This chain is Neurexin-2-beta, found in Mus musculus (Mouse).